Reading from the N-terminus, the 317-residue chain is R2-like ligand binding oxidase (317 aa).

Residues Glu-73, Glu-106, and His-109 each contribute to the Mn(2+) site. The 3-(O4'-tyrosyl)-valine (Val-Tyr) cross-link spans 76-167; the sequence is VTQDLQPFMA…ANQVRASVTY (92 aa). Fe cation is bound at residue Glu-106. The Fe cation site is built by Glu-172, Glu-207, and His-210.

Belongs to the ribonucleoside diphosphate reductase small chain family. R2-like ligand binding oxidase subfamily. In terms of assembly, homodimer. Fe cation serves as cofactor. Mn(2+) is required as a cofactor.

Probable oxidase. This chain is R2-like ligand binding oxidase, found in Saccharopolyspora erythraea (strain ATCC 11635 / DSM 40517 / JCM 4748 / NBRC 13426 / NCIMB 8594 / NRRL 2338).